A 642-amino-acid chain; its full sequence is Threonine--tRNA ligase (642 aa).

A TGS domain is found at 1-61; the sequence is MPVITLPDGS…ETDATLSIIT (61 aa). A catalytic region spans residues 243–534; sequence DHRKIGKQLD…LTEETAGYFP (292 aa). Zn(2+) is bound by residues Cys334, His385, and His511.

Belongs to the class-II aminoacyl-tRNA synthetase family. Homodimer. Requires Zn(2+) as cofactor.

The protein resides in the cytoplasm. The catalysed reaction is tRNA(Thr) + L-threonine + ATP = L-threonyl-tRNA(Thr) + AMP + diphosphate + H(+). Functionally, catalyzes the attachment of threonine to tRNA(Thr) in a two-step reaction: L-threonine is first activated by ATP to form Thr-AMP and then transferred to the acceptor end of tRNA(Thr). Also edits incorrectly charged L-seryl-tRNA(Thr). This is Threonine--tRNA ligase from Tolumonas auensis (strain DSM 9187 / NBRC 110442 / TA 4).